Here is a 152-residue protein sequence, read N- to C-terminus: Ribosome maturation factor RimP (152 aa).

The protein belongs to the RimP family.

Its subcellular location is the cytoplasm. In terms of biological role, required for maturation of 30S ribosomal subunits. The protein is Ribosome maturation factor RimP of Paraburkholderia phymatum (strain DSM 17167 / CIP 108236 / LMG 21445 / STM815) (Burkholderia phymatum).